Here is a 413-residue protein sequence, read N- to C-terminus: CinA-like protein (413 aa).

It belongs to the CinA family.

In Crocosphaera subtropica (strain ATCC 51142 / BH68) (Cyanothece sp. (strain ATCC 51142)), this protein is CinA-like protein.